We begin with the raw amino-acid sequence, 121 residues long: uncharacterized protein (121 aa).

A helical transmembrane segment spans residues 65–84 (TILFYTPTLICFLFLQNFLY).

The protein resides in the membrane. This is an uncharacterized protein from Saccharomyces cerevisiae (strain ATCC 204508 / S288c) (Baker's yeast).